We begin with the raw amino-acid sequence, 213 residues long: MSGSSNVENLSPQIIRQVAKEVLDLANHPPEGVKVFPNEQDITDVQATIEGPGGTPYEGGQFKIKLSLGKDFPQTPPKGFFLTKIFHPNVAKNGEICVNTLKKDWKADLGLKHILLTIKCLLIYPNPESALNEEAGKLLLEQYDNYSERARMMTEIHAKPTTKTAPTKNEETNCPSTSGTQSTSEGPMAKKHAGDKNAAEKKKKEKKRALRRL.

The UBC core domain maps to 13 to 159 (QIIRQVAKEV…ARMMTEIHAK (147 aa)). Cysteine 97 (glycyl thioester intermediate) is an active-site residue. A disordered region spans residues 157 to 213 (HAKPTTKTAPTKNEETNCPSTSGTQSTSEGPMAKKHAGDKNAAEKKKKEKKRALRRL). Polar residues predominate over residues 174 to 185 (CPSTSGTQSTSE). Residues 192–202 (HAGDKNAAEKK) show a composition bias toward basic and acidic residues. Basic residues predominate over residues 203–213 (KKEKKRALRRL).

Belongs to the ubiquitin-conjugating enzyme family.

The catalysed reaction is S-ubiquitinyl-[E1 ubiquitin-activating enzyme]-L-cysteine + [E2 ubiquitin-conjugating enzyme]-L-cysteine = [E1 ubiquitin-activating enzyme]-L-cysteine + S-ubiquitinyl-[E2 ubiquitin-conjugating enzyme]-L-cysteine.. The protein operates within protein modification; protein ubiquitination. Catalyzes the covalent attachment of ubiquitin to other proteins. Acts as an essential factor of the anaphase promoting complex/cyclosome (APC/C), a cell cycle-regulated ubiquitin ligase that controls progression through mitosis. Acts by specifically elongating polyubiquitin chains initiated by the E2 enzyme UBCH10 on APC/C substrates, enhancing the degradation of APC/C substrates by the proteasome and promoting mitotic exit. This chain is Ubiquitin-conjugating enzyme E2 S, found in Branchiostoma floridae (Florida lancelet).